Consider the following 245-residue polypeptide: Carboxy-S-adenosyl-L-methionine synthase (245 aa).

S-adenosyl-L-methionine contacts are provided by residues Tyr42, 67 to 69 (GCS), 92 to 93 (DN), 120 to 121 (DI), Asn135, and Arg202.

This sequence belongs to the class I-like SAM-binding methyltransferase superfamily. Cx-SAM synthase family. Homodimer.

It catalyses the reaction prephenate + S-adenosyl-L-methionine = carboxy-S-adenosyl-L-methionine + 3-phenylpyruvate + H2O. In terms of biological role, catalyzes the conversion of S-adenosyl-L-methionine (SAM) to carboxy-S-adenosyl-L-methionine (Cx-SAM). This chain is Carboxy-S-adenosyl-L-methionine synthase, found in Vibrio vulnificus (strain YJ016).